Here is a 141-residue protein sequence, read N- to C-terminus: ATP synthase epsilon chain (141 aa).

This sequence belongs to the ATPase epsilon chain family. As to quaternary structure, F-type ATPases have 2 components, CF(1) - the catalytic core - and CF(0) - the membrane proton channel. CF(1) has five subunits: alpha(3), beta(3), gamma(1), delta(1), epsilon(1). CF(0) has three main subunits: a, b and c.

It localises to the cell membrane. Functionally, produces ATP from ADP in the presence of a proton gradient across the membrane. The chain is ATP synthase epsilon chain from Natranaerobius thermophilus (strain ATCC BAA-1301 / DSM 18059 / JW/NM-WN-LF).